The chain runs to 140 residues: Small ribosomal subunit protein uS19 (140 aa).

Positions 120-140 are disordered; it reads RPKHSAPGIGATRSSAHVSKK. Residues 131-140 are compositionally biased toward polar residues; that stretch reads TRSSAHVSKK.

This sequence belongs to the universal ribosomal protein uS19 family.

Its function is as follows. Protein S19 forms a complex with S13 that binds strongly to the 16S ribosomal RNA. This Nanoarchaeum equitans (strain Kin4-M) protein is Small ribosomal subunit protein uS19.